We begin with the raw amino-acid sequence, 75 residues long: Protease B inhibitor 1 (75 aa).

Thr-74 carries the post-translational modification Phosphothreonine.

It belongs to the protease inhibitor I9 family. In terms of assembly, part of the heterodimeric LMA1 complex together with the thioredoxin II/TRX2. LMA1 binds to the ATPase SEC18.

Its subcellular location is the cytoplasm. The protein resides in the nucleus. Functionally, cytosolic inhibitor of vacuolar proteinase B (yscB), probably regulating protease B activity during limited proteolysis. PBI2 is a component of the LMA1 complex, which is involved in the facilitation of vesicle fusion such as homotypic vacuole and ER-derived COPII vesicle fusion with the Golgi. The sequence is that of Protease B inhibitor 1 (PBI2) from Saccharomyces cerevisiae (Baker's yeast).